A 329-amino-acid chain; its full sequence is Major outer membrane protein P.IB (329 aa).

A signal peptide spans 1 to 19; the sequence is MKKSLIALTLAALPVAAMA.

It belongs to the Gram-negative porin family. In terms of assembly, homotrimer.

Its subcellular location is the cell outer membrane. In terms of biological role, serves as a slightly cation selective porin. The polypeptide is Major outer membrane protein P.IB (porB) (Neisseria meningitidis serogroup A / serotype 4A (strain DSM 15465 / Z2491)).